Reading from the N-terminus, the 210-residue chain is Small ribosomal subunit protein uS3 (210 aa).

Residues 39–107 (IREKLMEKLK…EILLDIQEVK (69 aa)) enclose the KH type-2 domain.

Belongs to the universal ribosomal protein uS3 family. Part of the 30S ribosomal subunit. Forms a tight complex with proteins S10 and S14.

Its function is as follows. Binds the lower part of the 30S subunit head. Binds mRNA in the 70S ribosome, positioning it for translation. The protein is Small ribosomal subunit protein uS3 of Opitutus terrae (strain DSM 11246 / JCM 15787 / PB90-1).